The chain runs to 266 residues: 4-hydroxy-tetrahydrodipicolinate reductase (266 aa).

Residues 8–13 (GAAGRM) and glutamate 33 each bind NAD(+). Arginine 34 contacts NADP(+). NAD(+) is bound by residues 97 to 99 (GST) and 121 to 124 (APNM). The Proton donor/acceptor role is filled by histidine 154. Residue histidine 155 participates in (S)-2,3,4,5-tetrahydrodipicolinate binding. Catalysis depends on lysine 158, which acts as the Proton donor. 164–165 (GT) provides a ligand contact to (S)-2,3,4,5-tetrahydrodipicolinate.

This sequence belongs to the DapB family.

It is found in the cytoplasm. It catalyses the reaction (S)-2,3,4,5-tetrahydrodipicolinate + NAD(+) + H2O = (2S,4S)-4-hydroxy-2,3,4,5-tetrahydrodipicolinate + NADH + H(+). The catalysed reaction is (S)-2,3,4,5-tetrahydrodipicolinate + NADP(+) + H2O = (2S,4S)-4-hydroxy-2,3,4,5-tetrahydrodipicolinate + NADPH + H(+). Its pathway is amino-acid biosynthesis; L-lysine biosynthesis via DAP pathway; (S)-tetrahydrodipicolinate from L-aspartate: step 4/4. Catalyzes the conversion of 4-hydroxy-tetrahydrodipicolinate (HTPA) to tetrahydrodipicolinate. In Geobacter sulfurreducens (strain ATCC 51573 / DSM 12127 / PCA), this protein is 4-hydroxy-tetrahydrodipicolinate reductase.